Reading from the N-terminus, the 72-residue chain is Translational regulator CsrA (72 aa).

Belongs to the CsrA/RsmA family. In terms of assembly, homodimer; the beta-strands of each monomer intercalate to form a hydrophobic core, while the alpha-helices form wings that extend away from the core.

It localises to the cytoplasm. In terms of biological role, a translational regulator that binds mRNA to regulate translation initiation and/or mRNA stability. Usually binds in the 5'-UTR at or near the Shine-Dalgarno sequence preventing ribosome-binding, thus repressing translation. Its main target seems to be the major flagellin gene, while its function is anatagonized by FliW. This is Translational regulator CsrA from Ruminiclostridium cellulolyticum (strain ATCC 35319 / DSM 5812 / JCM 6584 / H10) (Clostridium cellulolyticum).